The sequence spans 402 residues: Potassium channel subfamily K member 9 (402 aa).

At 1-8 the chain is on the cytoplasmic side; it reads MKRQNVRT. The chain crosses the membrane as a helical span at residues 9-29; that stretch reads LSLIACTFTYLLVGAAVFDAL. At 30 to 88 the chain is on the extracellular side; the sequence is ESDHEMREEEKLKAEEVRLRGKYNISSDDYQQLELVILQSEPHRAGVQWKFAGSFYFAI. Residue Asn-53 is glycosylated (N-linked (GlcNAc...) asparagine). The segment at residues 89-101 is an intramembrane region (pore-forming); sequence TVITTIGYGHAAP. The K(+) site is built by Thr-93, Ile-94, Gly-95, and Tyr-96. The selectivity filter 1 stretch occupies residues 93–98; that stretch reads TIGYGH. Residues 102-107 are Extracellular-facing; that stretch reads GTDAGK. Residues 108-128 form a helical membrane-spanning segment; that stretch reads AFCMFYAVLGIPLTLVMFQSL. Residues 129–158 are Cytoplasmic-facing; it reads GERMNTFVRYLLKRIKKCCGMRNTEVSMEN. A helical transmembrane segment spans residues 159–179; it reads MVTVGFFSCMGTLCLGAAAFS. Over 180–194 the chain is Extracellular; the sequence is QCEDWSFFHAYYYCF. Residues 195–207 constitute an intramembrane region (pore-forming); that stretch reads ITLTTIGFGDFVA. Residues Thr-199, Ile-200, Gly-201, and Phe-202 each coordinate K(+). Residues 199 to 204 are selectivity filter 2; it reads TIGFGD. At 208-218 the chain is on the extracellular side; that stretch reads LQAKGALQRKP. The helical transmembrane segment at 219 to 239 threads the bilayer; sequence FYVAFSFMYILVGLTVIGAFL. Topologically, residues 240-402 are cytoplasmic; that stretch reads NLVVLRFLTM…HRLHLRRKSI (163 aa). Residues 243–248 are X-gate; that stretch reads VLRFLT.

This sequence belongs to the two pore domain potassium channel (TC 1.A.1.8) family. Homodimer. Heterodimer with KCNK1. Heterodimer with KCNK3. Expressed in adrenal glands mainly in outer zona glomerulosa and inner zona medullaris. Expressed in retinal ganglion cells. Expressed in dentate gyrus (at protein level).

It is found in the cell membrane. It localises to the mitochondrion inner membrane. The protein localises to the cell projection. Its subcellular location is the dendrite. The enzyme catalyses K(+)(in) = K(+)(out). It catalyses the reaction Na(+)(in) = Na(+)(out). Inhibited by NTS:NTSR1 signaling in dentate gyrus granule cells. Its function is as follows. K(+) channel that conducts voltage-dependent outward rectifying currents upon membrane depolarization. Voltage sensing is coupled to K(+) electrochemical gradient in an 'ion flux gating' mode where outward but not inward ion flow opens the gate. Changes ion selectivity and becomes permeable to Na(+) ions in response to extracellular acidification. Protonation of the pH sensor His-98 stabilizes C-type inactivation conformation likely converting the channel from outward K(+)-conducting, to inward Na(+)-conducting to nonconductive state. Homo- and heterodimerizes to form functional channels with distinct regulatory and gating properties. Allows K(+) currents with fast-gating kinetics important for the repolarization and hyperpolarization phases of action potentials. In granule neurons, hyperpolarizes the resting membrane potential to limit intrinsic neuronal excitability, but once the action potential threshold is reached, supports high-frequency action potential firing and increased neuronal excitability. Homomeric and/or heteromeric KCNK3:KCNK9 channels operate in cerebellar granule cells, whereas heteromeric KCNK1:KCNK9 enables currents in hippocampal dentate gyrus granule neurons. Dispensable for central chemosensory respiration i.e. breathing controlled by brainstem CO2/pH, it rather conducts pH-sensitive currents and controls the firing rate of serotonergic raphe neurons involved in potentiation of the respiratory chemoreflex. In retinal ganglion cells, mediates outward rectifying currents that regulate action potentials in response to acidification of the synaptic cleft. Involved in transmission of image-forming and nonimage-forming visual information in the retina. In adrenal gland, contributes to the maintenance of a hyperpolarized resting membrane potential of aldosterone-producing cells at zona glomerulosa and limits aldosterone release as part of a regulatory mechanism that controls arterial blood pressure and electrolyte homeostasis. The chain is Potassium channel subfamily K member 9 from Mus musculus (Mouse).